Reading from the N-terminus, the 264-residue chain is MKAVVLTVAVFFLTGSQARHFWQQDEPQSSWDRMKDFATVYLDAVKDSGRDYVTQFETSALGKQLNLKLLDNWDSLSSTVSKLREQIGPVTQEFWDKLEKDTVSLRQEMNKDLEEVKLKVQPYLDEFQKRWQEDVERYRQQVEPLGTELREGARQKLQELHEKLSPLGQELRDRARAHVDALRTHLAPYSDELRQRLAARLEALKESSSLADYQAKATEHLSALGEKAKPALEDLRQGLLPVLENLKMSFWSAVDEATKKLTTQ.

Positions 1 to 18 are cleaved as a signal peptide; sequence MKAVVLTVAVFFLTGSQA. 2 tandem repeats follow at residues 67–88 and 89–110. A 10 X approximate tandem repeats region spans residues 67–264; sequence LKLLDNWDSL…DEATKKLTTQ (198 aa). Met-109 carries the post-translational modification Methionine sulfoxide. A 3; half-length repeat occupies 111–121; sequence KDLEEVKLKVQ. 3 consecutive repeat copies span residues 122-143, 144-165, and 166-187. The stretch at 188 to 207 is one 7; truncated repeat; it reads PYSDELRQRLAARLEALKES. Copy 8 of the repeat occupies 208–229; sequence SSLADYQAKATEHLSALGEKAK. Residues 230-240 form a 9; half-length repeat; it reads PALEDLRQGLL. Repeat unit 10 spans residues 241–264; it reads PVLENLKMSFWSAVDEATKKLTTQ.

It belongs to the apolipoprotein A1/A4/E family. Homodimer. Interacts with APOA1BP and CLU. Component of a sperm activating protein complex (SPAP), consisting of APOA1, an immunoglobulin heavy chain, an immunoglobulin light chain and albumin. Interacts with NDRG1. Interacts with SCGB3A2. Interacts with NAXE and YJEFN3. In terms of processing, glycosylated. Post-translationally, palmitoylated. Phosphorylation sites are present in the extracellular medium.

The protein localises to the secreted. Participates in the reverse transport of cholesterol from tissues to the liver for excretion by promoting cholesterol efflux from tissues and by acting as a cofactor for the lecithin cholesterol acyltransferase (LCAT). As part of the SPAP complex, activates spermatozoa motility. The chain is Apolipoprotein A-I (ApoA1) from Marmota monax (Woodchuck).